The primary structure comprises 200 residues: LexA repressor (200 aa).

The H-T-H motif DNA-binding region spans 27–47; it reads VREICNAVELRSTSTVHGHLK. Residues serine 124 and lysine 161 each act as for autocatalytic cleavage activity in the active site.

Belongs to the peptidase S24 family. In terms of assembly, homodimer.

It carries out the reaction Hydrolysis of Ala-|-Gly bond in repressor LexA.. Represses a number of genes involved in the response to DNA damage (SOS response), including recA and lexA. In the presence of single-stranded DNA, RecA interacts with LexA causing an autocatalytic cleavage which disrupts the DNA-binding part of LexA, leading to derepression of the SOS regulon and eventually DNA repair. The protein is LexA repressor of Clostridium tetani (strain Massachusetts / E88).